The chain runs to 314 residues: MTGGCPTRPRVIVLCGPTGVGKTRLAIALAEEFGGQIVGADSMQVYRYMDIGTAKPTPAEQARVPHHMIDVADPDESFSAGRYARMARPILMDLNEQGVLPVLAGGTGLYIKACLHGLFRKHSADKAVLERLEREANDQGSAVLHQRLAVCDPETAERIHPNDRFRIVRALEVFESTGLPASGHRQAHGFAEDPFDALKICLHLDRKTLYGRINHRVDLMLADGFEKEVAGLLARGYAPELKAMQSIGYRHMTAWLAGGISRETAVENMKKDTRRYAKRQETWFKADPDMVWVDQKEGLEKVPFLVKRFLRYGK.

An ATP-binding site is contributed by 16–23; sequence GPTGVGKT. 18–23 lines the substrate pocket; the sequence is TGVGKT. Positions 41 to 44 are interaction with substrate tRNA; the sequence is DSMQ.

The protein belongs to the IPP transferase family. In terms of assembly, monomer. Requires Mg(2+) as cofactor.

The enzyme catalyses adenosine(37) in tRNA + dimethylallyl diphosphate = N(6)-dimethylallyladenosine(37) in tRNA + diphosphate. Functionally, catalyzes the transfer of a dimethylallyl group onto the adenine at position 37 in tRNAs that read codons beginning with uridine, leading to the formation of N6-(dimethylallyl)adenosine (i(6)A). This chain is tRNA dimethylallyltransferase, found in Desulfosudis oleivorans (strain DSM 6200 / JCM 39069 / Hxd3) (Desulfococcus oleovorans).